Here is a 35-residue protein sequence, read N- to C-terminus: MHTYAAIFGVVAILLHLIENRRCVKLYVRETLRGV.

This is an uncharacterized protein from Archaeoglobus fulgidus (strain ATCC 49558 / DSM 4304 / JCM 9628 / NBRC 100126 / VC-16).